The chain runs to 996 residues: KK-1 biosynthesis cluster protein D (996 aa).

Disordered regions lie at residues 307 to 333, 425 to 449, 489 to 556, and 571 to 602; these read HDTD…PELD, EQDN…ARDL, AGVA…ALRA, and STHS…SLHS. Polar residues-rich tracts occupy residues 318 to 329 and 428 to 439; these read PIRSNKLSQSKQ and NQTNEEGTGEVQ. Basic and acidic residues-rich tracts occupy residues 440 to 449 and 500 to 527; these read SQRDRRARDL and RAAE…DKAA. Polar residues predominate over residues 572-590; sequence THSIHQRASVNTTAPTVAR.

It functions in the pathway secondary metabolite biosynthesis. Part of the gene cluster that mediates the biosynthesis of KK-1, a novel cyclic depsipeptide with 10 residues which is a promising active compound with high activity against many plant pathogens, especially Botrytis cinerea. The role of kk1D in KK-1 biosynthesis has still to be determined. The nonribosomal peptide synthetase (NRPS) kk1B catalyzes the elongation and cyclization of the decapeptide chain composed of 1 D-lactic acid residue (D-Lac), 1 pipecolic acid residue (Pip), 1 aspartic acid residue (Asp), 1 isoleucine residue (Ile), 1 glycine residue (Gly), 1 tyrosine residue (Tyr) and 4 valine residues (Val). The Asp, Ile and 3 Val residues are N-methylated by the 5 methyltransferase domains from the NRPS (found in modules 3, 5, 6, 7 and 9), whereas the Tyr residue is O-methylated by the cluster encoded O-methyltransferase kk1A. The thioesterase kk1J is likely to be involved in the corrective mechanism of peptide chain synthesis. The D-lactate dehydrogenase kk1H is involved in the synthesis of D-lactic acid from pyruvic acid, which is recognized by the A domain of the first kk1B module. The pyrroline-5-carboxylate reductase kk1I is involved in the synthesis of the L-pipecolic acid residue of KK-1 from delta-1-pyrroline-5-carboxylate (P5C), a metabolic intermediate of lysine. It is still unclear how kk1C and kk1D are involved in the production of KK-1. In Curvularia clavata, this protein is KK-1 biosynthesis cluster protein D.